Here is a 362-residue protein sequence, read N- to C-terminus: sn-glycerol-3-phosphate import ATP-binding protein UgpC (362 aa).

The region spanning 4–235 (LSFRNVKKTY…PASTFVAGFI (232 aa)) is the ABC transporter domain. 37 to 44 (GPSGCGKS) is a binding site for ATP.

Belongs to the ABC transporter superfamily. sn-glycerol-3-phosphate importer (TC 3.A.1.1.3) family. In terms of assembly, the complex is composed of two ATP-binding proteins (UgpC), two transmembrane proteins (UgpA and UgpE) and a solute-binding protein (UgpB).

Its subcellular location is the cell inner membrane. The catalysed reaction is sn-glycerol 3-phosphate(out) + ATP + H2O = sn-glycerol 3-phosphate(in) + ADP + phosphate + H(+). Functionally, part of the ABC transporter complex UgpBAEC involved in sn-glycerol-3-phosphate (G3P) import. Responsible for energy coupling to the transport system. The sequence is that of sn-glycerol-3-phosphate import ATP-binding protein UgpC from Bordetella parapertussis (strain 12822 / ATCC BAA-587 / NCTC 13253).